The primary structure comprises 1039 residues: Antigen 43 (1039 aa).

A signal peptide spans 1–52 (MKRHLNTCYRLVWNHMTGAFVVASELARARGKRGGVAVALSLAAVTSLPVLA). The Autotransporter domain maps to 737–1039 (VNGENNSVRL…NGQATLNVTF (303 aa)).

In terms of assembly, interaction with TamA of the translocation and assembly module (TAM) initiates insertion in the outer membrane.

The protein resides in the periplasm. The protein localises to the secreted. Its subcellular location is the cell surface. It localises to the cell outer membrane. Its function is as follows. Controls colony form variation and autoaggregation. May function as an adhesin. This chain is Antigen 43 (flu), found in Escherichia coli (strain K12).